Reading from the N-terminus, the 494-residue chain is Glycerol kinase (494 aa).

Residue threonine 12 participates in ADP binding. Threonine 12, threonine 13, and serine 14 together coordinate ATP. A sn-glycerol 3-phosphate-binding site is contributed by threonine 12. Position 16 (arginine 16) interacts with ADP. Sn-glycerol 3-phosphate is bound by residues arginine 82, glutamate 83, tyrosine 134, and aspartate 241. The glycerol site is built by arginine 82, glutamate 83, tyrosine 134, aspartate 241, and glutamine 242. The ADP site is built by threonine 263 and glycine 306. Threonine 263, glycine 306, glutamine 310, and glycine 407 together coordinate ATP. Glycine 407 contributes to the ADP binding site.

Belongs to the FGGY kinase family.

It catalyses the reaction glycerol + ATP = sn-glycerol 3-phosphate + ADP + H(+). It functions in the pathway polyol metabolism; glycerol degradation via glycerol kinase pathway; sn-glycerol 3-phosphate from glycerol: step 1/1. Its activity is regulated as follows. Inhibited by fructose 1,6-bisphosphate (FBP). In terms of biological role, key enzyme in the regulation of glycerol uptake and metabolism. Catalyzes the phosphorylation of glycerol to yield sn-glycerol 3-phosphate. The sequence is that of Glycerol kinase from Brachyspira hyodysenteriae (strain ATCC 49526 / WA1).